Consider the following 83-residue polypeptide: Polcalcin Bra r 2 (83 aa).

EF-hand domains are found at residues 5–40 and 43–75; these read TEKA…LGSV and DDIK…NRGL. Ca(2+) is bound by residues D18, N20, D22, K24, E29, D53, D55, D57, Y59, and E64.

This Brassica campestris (Field mustard) protein is Polcalcin Bra r 2.